The primary structure comprises 246 residues: ATP synthase subunit a, chloroplastic (246 aa).

5 helical membrane passes run Ala35–Ala55, Ile94–Ile114, Asp132–Leu152, Leu198–Leu218, and Gly219–Gly239.

It belongs to the ATPase A chain family. As to quaternary structure, F-type ATPases have 2 components, CF(1) - the catalytic core - and CF(0) - the membrane proton channel. CF(1) has five subunits: alpha(3), beta(3), gamma(1), delta(1), epsilon(1). CF(0) has four main subunits: a, b, b' and c.

The protein localises to the plastid. Its subcellular location is the chloroplast thylakoid membrane. Key component of the proton channel; it plays a direct role in the translocation of protons across the membrane. In Chara vulgaris (Common stonewort), this protein is ATP synthase subunit a, chloroplastic.